We begin with the raw amino-acid sequence, 242 residues long: Probable transcriptional regulatory protein mhp472 (242 aa).

Belongs to the TACO1 family.

The protein resides in the cytoplasm. This Mesomycoplasma hyopneumoniae (strain 232) (Mycoplasma hyopneumoniae) protein is Probable transcriptional regulatory protein mhp472.